Reading from the N-terminus, the 443-residue chain is Amino-acid acetyltransferase (443 aa).

The region spanning 296 to 436 is the N-acetyltransferase domain; that stretch reads EQIRRATIND…KMYNYQRRSK (141 aa).

Belongs to the acetyltransferase family. ArgA subfamily. As to quaternary structure, homohexamer.

The protein localises to the cytoplasm. It carries out the reaction L-glutamate + acetyl-CoA = N-acetyl-L-glutamate + CoA + H(+). Its pathway is amino-acid biosynthesis; L-arginine biosynthesis; N(2)-acetyl-L-ornithine from L-glutamate: step 1/4. This is Amino-acid acetyltransferase from Salmonella arizonae (strain ATCC BAA-731 / CDC346-86 / RSK2980).